Reading from the N-terminus, the 287-residue chain is Phosphoribosylaminoimidazole-succinocarboxamide synthase (287 aa).

Belongs to the SAICAR synthetase family.

The enzyme catalyses 5-amino-1-(5-phospho-D-ribosyl)imidazole-4-carboxylate + L-aspartate + ATP = (2S)-2-[5-amino-1-(5-phospho-beta-D-ribosyl)imidazole-4-carboxamido]succinate + ADP + phosphate + 2 H(+). It participates in purine metabolism; IMP biosynthesis via de novo pathway; 5-amino-1-(5-phospho-D-ribosyl)imidazole-4-carboxamide from 5-amino-1-(5-phospho-D-ribosyl)imidazole-4-carboxylate: step 1/2. This chain is Phosphoribosylaminoimidazole-succinocarboxamide synthase, found in Neisseria meningitidis serogroup C (strain 053442).